A 170-amino-acid polypeptide reads, in one-letter code: Translationally-controlled tumor protein homolog (170 aa).

Residues 1 to 170 enclose the TCTP domain; sequence MIIYKCIISG…FKDGLLAEKC (170 aa).

This sequence belongs to the TCTP family.

The protein resides in the cytoplasm. In terms of biological role, involved in calcium binding and microtubule stabilization. This chain is Translationally-controlled tumor protein homolog (tpt1), found in Lateolabrax japonicus (Japanese sea perch).